A 20-amino-acid polypeptide reads, in one-letter code: Brevinin-1SPd (20 aa).

Residues Cys-14 and Cys-20 are joined by a disulfide bond.

Expressed by the skin glands.

It is found in the secreted. Antimicrobial peptide with activity against Gram-negative and Gram-positive bacteria (MIC=13 uM against E.coli, MIC=3 uM against S.aureus) and fungi (MIC=3 uM against C.albicans). Shows hemolytic activity on human erythrocytes (HC(50)=8 uM). The sequence is that of Brevinin-1SPd from Lithobates septentrionalis (Mink frog).